A 2230-amino-acid polypeptide reads, in one-letter code: DNA polymerase epsilon catalytic subunit A (2230 aa).

The span at 1–19 shows a compositional bias: polar residues; that stretch reads MPTRQPSKYGNKFRSSSAS. The segment at 1 to 24 is disordered; sequence MPTRQPSKYGNKFRSSSASFKPKR. Zn(2+)-binding residues include cysteine 2101, cysteine 2104, cysteine 2136, and cysteine 2139. The CysA-type zinc finger occupies 2101–2139; the sequence is CNACCLIRDLDLCRDEDVLPEMGSDPNKAAPKPWRCPFC. 4 residues coordinate [4Fe-4S] cluster: cysteine 2170, cysteine 2173, cysteine 2185, and cysteine 2187. Residues 2170–2187 carry the CysB motif motif; the sequence is CSKCGGLKISDFMEHCSC.

Belongs to the DNA polymerase type-B family. As to quaternary structure, heterotetramer. Consists of 4 subunits: pol2, dpb2, dpb3 and dpb4. [4Fe-4S] cluster serves as cofactor.

It localises to the nucleus. The catalysed reaction is DNA(n) + a 2'-deoxyribonucleoside 5'-triphosphate = DNA(n+1) + diphosphate. Functionally, DNA polymerase II participates in chromosomal DNA replication. In Aspergillus fumigatus (strain ATCC MYA-4609 / CBS 101355 / FGSC A1100 / Af293) (Neosartorya fumigata), this protein is DNA polymerase epsilon catalytic subunit A (pol2).